The following is a 215-amino-acid chain: Putative zinc finger protein ORF121 (215 aa).

Residues 53–105 form an RING-type; degenerate zinc finger; the sequence is CVICMEPTYTKKTLAECDIEGGALRVTTMPCPTHYICDNCIRQEMEDKCPICR.

This chain is Putative zinc finger protein ORF121, found in Magallana gigas (Pacific oyster).